The primary structure comprises 391 residues: Trehalose-phosphate phosphatase (391 aa).

Asp-147 functions as the Nucleophile in the catalytic mechanism. Residues Asp-147, Asp-149, and Asp-330 each coordinate Mg(2+). 147-149 (DFD) lines the substrate pocket.

This sequence belongs to the trehalose phosphatase family. Mg(2+) is required as a cofactor.

It carries out the reaction alpha,alpha-trehalose 6-phosphate + H2O = alpha,alpha-trehalose + phosphate. It functions in the pathway glycan biosynthesis; trehalose biosynthesis. In terms of biological role, removes the phosphate from trehalose 6-phosphate to produce free trehalose. The protein is Trehalose-phosphate phosphatase (otsB) of Mycolicibacterium paratuberculosis (strain ATCC BAA-968 / K-10) (Mycobacterium paratuberculosis).